We begin with the raw amino-acid sequence, 223 residues long: Cytidylate kinase (223 aa).

10–18 (GPASSGKST) contacts ATP.

The protein belongs to the cytidylate kinase family. Type 1 subfamily.

It is found in the cytoplasm. It carries out the reaction CMP + ATP = CDP + ADP. The enzyme catalyses dCMP + ATP = dCDP + ADP. The sequence is that of Cytidylate kinase from Streptococcus pneumoniae (strain Taiwan19F-14).